Here is a 274-residue protein sequence, read N- to C-terminus: Shikimate dehydrogenase (NADP(+)) (274 aa).

Shikimate-binding positions include 20–22 (SKS) and Thr68. Residue Lys72 is the Proton acceptor of the active site. Asp84 contributes to the NADP(+) binding site. Residues Asn93 and Asp109 each contribute to the shikimate site. NADP(+)-binding positions include 131–135 (GAGGA) and Leu217. Tyr219 contacts shikimate. Gly240 is an NADP(+) binding site.

It belongs to the shikimate dehydrogenase family. Homodimer.

The catalysed reaction is shikimate + NADP(+) = 3-dehydroshikimate + NADPH + H(+). Its pathway is metabolic intermediate biosynthesis; chorismate biosynthesis; chorismate from D-erythrose 4-phosphate and phosphoenolpyruvate: step 4/7. In terms of biological role, involved in the biosynthesis of the chorismate, which leads to the biosynthesis of aromatic amino acids. Catalyzes the reversible NADPH linked reduction of 3-dehydroshikimate (DHSA) to yield shikimate (SA). This is Shikimate dehydrogenase (NADP(+)) from Sphingopyxis alaskensis (strain DSM 13593 / LMG 18877 / RB2256) (Sphingomonas alaskensis).